A 287-amino-acid chain; its full sequence is Aquaporin PIP1-2 (287 aa).

Positions 1 to 37 (MEGKEEDVRLGANKFTERQPIGTAAQSQDKDYKEPPP) are disordered. The Cytoplasmic portion of the chain corresponds to 1–55 (MEGKEEDVRLGANKFTERQPIGTAAQSQDKDYKEPPPAPLFEPGELSSWSFYRAG). A helical transmembrane segment spans residues 56 to 76 (IAEFVATFLFLYITILTVMGV). Over 77–89 (VKSSTKCSTVGIQ) the chain is Extracellular. Residues 90–110 (GIAWAFGGMIFALVYCTAGIS) form a helical membrane-spanning segment. Residues 111–133 (GGHINPAVTFGLFLARKLSLTRA) are Cytoplasmic-facing. The NPA 1 motif lies at 115-117 (NPA). Residues 134–154 (LFYMVMQCLGAICGAGVVKGF) form a helical membrane-spanning segment. The Extracellular segment spans residues 155–175 (QKGLYENNGGGANVVAPGYTK). A helical membrane pass occupies residues 176–196 (GDGLGAEIVGTFILVYTVFSA). Residues 197-209 (TDAKRSARDSHVP) lie on the Cytoplasmic side of the membrane. Residues 210 to 230 (ILAPLPIGFAVFLVHLATIPI) traverse the membrane as a helical segment. Residues 231–257 (TGTGINPARSLGAAIIYNKGHAWDDHW) lie on the Extracellular side of the membrane. An NPA 2 motif is present at residues 236 to 238 (NPA). A helical membrane pass occupies residues 258 to 278 (IFWVGPFIGAALAALYHQVVI). At 279-287 (RAIPFKSRS) the chain is on the cytoplasmic side.

It belongs to the MIP/aquaporin (TC 1.A.8) family. PIP (TC 1.A.8.11) subfamily. Barely detectable in roots, leaves and fruits.

It is found in the cell membrane. Functionally, water channel required to facilitate the transport of water across cell membrane; mercury-insensitive. Contributes to the tolerance to multiple abiotic stresses including salt (NaCl), cold and water deprivation, by modulating cytosolic K(+)/Na(+) ratio, maintaining osmotic balance, and reducing membrane injury (e.g. oxidative injury). In Musa acuminata subsp. malaccensis (Wild banana), this protein is Aquaporin PIP1-2.